We begin with the raw amino-acid sequence, 338 residues long: Aspartate carbamoyltransferase catalytic subunit (338 aa).

Positions 72 and 73 each coordinate carbamoyl phosphate. Residue lysine 100 coordinates L-aspartate. 3 residues coordinate carbamoyl phosphate: arginine 122, histidine 152, and glutamine 155. Positions 186 and 243 each coordinate L-aspartate. Carbamoyl phosphate contacts are provided by glycine 284 and proline 285.

This sequence belongs to the aspartate/ornithine carbamoyltransferase superfamily. ATCase family. Heterododecamer (2C3:3R2) of six catalytic PyrB chains organized as two trimers (C3), and six regulatory PyrI chains organized as three dimers (R2).

It catalyses the reaction carbamoyl phosphate + L-aspartate = N-carbamoyl-L-aspartate + phosphate + H(+). It functions in the pathway pyrimidine metabolism; UMP biosynthesis via de novo pathway; (S)-dihydroorotate from bicarbonate: step 2/3. Its function is as follows. Catalyzes the condensation of carbamoyl phosphate and aspartate to form carbamoyl aspartate and inorganic phosphate, the committed step in the de novo pyrimidine nucleotide biosynthesis pathway. The sequence is that of Aspartate carbamoyltransferase catalytic subunit from Acinetobacter baumannii (strain SDF).